Here is a 277-residue protein sequence, read N- to C-terminus: MTDLYAVVGNPIAHSKSPLIHRLFAEQTDQDLVYEALLIDTEDTTFQFAISDLIARGYRGINITVPFKLDAFELADELSPRAEVAHAVNTFSFKDGKIFGDNTDGIGLVTDIEENANRPFKDQKVLILGAGGAVQGILQPLLEKQPGLVHIANRTAKRAEVLGKRFETFSPITSSDWEGIPDQAYDIIINGTSASLEGKLPPINSNVVGQDSLVYDMMYGAEPTIFMQWAQQHQPSCQVRDGLGMLVGQAAEAFYIWRGVRPQTQSVIDEVRRLIQA.

Shikimate contacts are provided by residues 15 to 17 (SKS) and T64. K68 (proton acceptor) is an active-site residue. The shikimate site is built by N89 and D104. Residues 129–133 (GAGGA), 153–158 (NRTAKR), and M217 each bind NADP(+). Residue Y219 coordinates shikimate. G242 serves as a coordination point for NADP(+).

The protein belongs to the shikimate dehydrogenase family. As to quaternary structure, homodimer.

It catalyses the reaction shikimate + NADP(+) = 3-dehydroshikimate + NADPH + H(+). It participates in metabolic intermediate biosynthesis; chorismate biosynthesis; chorismate from D-erythrose 4-phosphate and phosphoenolpyruvate: step 4/7. Its function is as follows. Involved in the biosynthesis of the chorismate, which leads to the biosynthesis of aromatic amino acids. Catalyzes the reversible NADPH linked reduction of 3-dehydroshikimate (DHSA) to yield shikimate (SA). This is Shikimate dehydrogenase (NADP(+)) from Hydrogenovibrio crunogenus (strain DSM 25203 / XCL-2) (Thiomicrospira crunogena).